The chain runs to 159 residues: Troponin C, skeletal muscle (159 aa).

Threonine 1 bears the N-acetylthreonine mark. EF-hand domains follow at residues 14 to 49 (EMIA…LGQT), 50 to 85 (PTKE…QMKE), 90 to 125 (KSEE…SGEH), and 126 to 159 (VTDE…EGVQ). Positions 27, 29, 33, 38, 63, 65, 67, 69, 74, 103, 105, 107, 109, 114, 139, 141, 143, 145, and 150 each coordinate Ca(2+).

Belongs to the troponin C family.

Troponin is the central regulatory protein of striated muscle contraction. Tn consists of three components: Tn-I which is the inhibitor of actomyosin ATPase, Tn-T which contains the binding site for tropomyosin and Tn-C. The binding of calcium to Tn-C abolishes the inhibitory action of Tn on actin filaments. The sequence is that of Troponin C, skeletal muscle (TNNC2) from Sus scrofa (Pig).